A 316-amino-acid chain; its full sequence is Porphobilinogen deaminase (316 aa).

C240 bears the S-(dipyrrolylmethanemethyl)cysteine mark.

This sequence belongs to the HMBS family. Monomer. The cofactor is dipyrromethane.

It carries out the reaction 4 porphobilinogen + H2O = hydroxymethylbilane + 4 NH4(+). It functions in the pathway porphyrin-containing compound metabolism; protoporphyrin-IX biosynthesis; coproporphyrinogen-III from 5-aminolevulinate: step 2/4. Its function is as follows. Tetrapolymerization of the monopyrrole PBG into the hydroxymethylbilane pre-uroporphyrinogen in several discrete steps. The protein is Porphobilinogen deaminase of Alkaliphilus metalliredigens (strain QYMF).